Consider the following 418-residue polypeptide: Tyrosine--tRNA ligase 1 (418 aa).

Tyrosine 34 lines the L-tyrosine pocket. A 'HIGH' region motif is present at residues 39-48 (PTADSLHIGH). L-tyrosine is bound by residues tyrosine 169 and glutamine 173. The 'KMSKS' region motif lies at 230-234 (KFGKT). Position 233 (lysine 233) interacts with ATP. The region spanning 352–418 (TVLIDLLVES…GKKKYFLIRY (67 aa)) is the S4 RNA-binding domain.

The protein belongs to the class-I aminoacyl-tRNA synthetase family. TyrS type 1 subfamily. Homodimer.

It localises to the cytoplasm. It carries out the reaction tRNA(Tyr) + L-tyrosine + ATP = L-tyrosyl-tRNA(Tyr) + AMP + diphosphate + H(+). Catalyzes the attachment of tyrosine to tRNA(Tyr) in a two-step reaction: tyrosine is first activated by ATP to form Tyr-AMP and then transferred to the acceptor end of tRNA(Tyr). This Bacillus anthracis protein is Tyrosine--tRNA ligase 1.